We begin with the raw amino-acid sequence, 293 residues long: Nucleotide-binding protein HRM2_27900 (293 aa).

11–18 is a binding site for ATP; it reads GLSGSGKS. 62–65 contributes to the GTP binding site; it reads DIRA.

It belongs to the RapZ-like family.

In terms of biological role, displays ATPase and GTPase activities. In Desulforapulum autotrophicum (strain ATCC 43914 / DSM 3382 / VKM B-1955 / HRM2) (Desulfobacterium autotrophicum), this protein is Nucleotide-binding protein HRM2_27900.